The following is a 210-amino-acid chain: Large ribosomal subunit protein uL4 (210 aa).

The interval 41 to 79 (MANARQGTASTKTRAEVRGGGRKPWRQKGTGRARAGSNR) is disordered. Over residues 43 to 52 (NARQGTASTK) the composition is skewed to polar residues. Residues 60-71 (GGRKPWRQKGTG) are compositionally biased toward basic residues.

It belongs to the universal ribosomal protein uL4 family. In terms of assembly, part of the 50S ribosomal subunit.

Its function is as follows. One of the primary rRNA binding proteins, this protein initially binds near the 5'-end of the 23S rRNA. It is important during the early stages of 50S assembly. It makes multiple contacts with different domains of the 23S rRNA in the assembled 50S subunit and ribosome. Functionally, forms part of the polypeptide exit tunnel. The protein is Large ribosomal subunit protein uL4 of Cyanothece sp. (strain PCC 7425 / ATCC 29141).